We begin with the raw amino-acid sequence, 467 residues long: ATP synthase subunit beta, chloroplastic (467 aa).

Residue 149 to 156 (GGAGVGKT) coordinates ATP.

This sequence belongs to the ATPase alpha/beta chains family. F-type ATPases have 2 components, CF(1) - the catalytic core - and CF(0) - the membrane proton channel. CF(1) has five subunits: alpha(3), beta(3), gamma(1), delta(1), epsilon(1). CF(0) has four main subunits: a(1), b(1), b'(1) and c(9-12).

The protein resides in the plastid. It is found in the chloroplast thylakoid membrane. It carries out the reaction ATP + H2O + 4 H(+)(in) = ADP + phosphate + 5 H(+)(out). In terms of biological role, produces ATP from ADP in the presence of a proton gradient across the membrane. The catalytic sites are hosted primarily by the beta subunits. This chain is ATP synthase subunit beta, chloroplastic, found in Cyanidioschyzon merolae (strain NIES-3377 / 10D) (Unicellular red alga).